The sequence spans 97 residues: Putative CC-type chemokine U83 (97 aa).

Cystine bridges form between C32–C62 and C33–C76.

Belongs to the intercrine beta (chemokine CC) family. Highly divergent.

This is Putative CC-type chemokine U83 (U83) from Homo sapiens (Human).